The following is a 252-amino-acid chain: Phosphate import ATP-binding protein PstB 1 (252 aa).

The region spanning 6 to 247 is the ABC transporter domain; sequence ISSKDLHLYY…PKEKQTEDYI (242 aa). An ATP-binding site is contributed by 38–45; sequence GPSGCGKS.

It belongs to the ABC transporter superfamily. Phosphate importer (TC 3.A.1.7) family. As to quaternary structure, the complex is composed of two ATP-binding proteins (PstB), two transmembrane proteins (PstC and PstA) and a solute-binding protein (PstS).

It is found in the cell membrane. It catalyses the reaction phosphate(out) + ATP + H2O = ADP + 2 phosphate(in) + H(+). Its function is as follows. Part of the ABC transporter complex PstSACB involved in phosphate import. Responsible for energy coupling to the transport system. In Enterococcus faecalis (strain ATCC 700802 / V583), this protein is Phosphate import ATP-binding protein PstB 1.